Consider the following 314-residue polypeptide: Transmembrane protein 248 (314 aa).

A helical membrane pass occupies residues 21–41; sequence VVFMISVSAMAIAFLTLGYFF. A disordered region spans residues 78–106; it reads LSNDTTTPESTMTVGQARSSTQPPQSLEE. Residues 80 to 105 show a composition bias toward polar residues; the sequence is NDTTTPESTMTVGQARSSTQPPQSLE. A run of 3 helical transmembrane segments spans residues 179 to 199, 236 to 258, and 270 to 290; these read QAVF…PVTV, FWCY…TVVV, and LMHT…YAVI.

Belongs to the TMEM248 family.

It localises to the membrane. This Mus musculus (Mouse) protein is Transmembrane protein 248 (Tmem248).